The sequence spans 118 residues: V-type proton ATPase subunit G 3 (118 aa).

A compositionally biased stretch (polar residues) spans 1 to 12; sequence MTSQSQGIQQLL. A disordered region spans residues 1-44; sequence MTSQSQGIQQLLQAEKRAKDKLDEAKKRKGKRLRQAKEEAVAET. Residues 5–53 adopt a coiled-coil conformation; it reads SQGIQQLLQAEKRAKDKLDEAKKRKGKRLRQAKEEAVAETDQYRMQMEK. Residues 14 to 26 show a composition bias toward basic and acidic residues; it reads AEKRAKDKLDEAK.

This sequence belongs to the V-ATPase G subunit family. In terms of assembly, V-ATPase is a heteromultimeric enzyme made up of two complexes: the ATP-hydrolytic V1 complex and the proton translocation V0 complex. The V1 complex consists of three catalytic AB heterodimers that form a heterohexamer, three peripheral stalks each consisting of EG heterodimers, one central rotor including subunits D and F, and the regulatory subunits C and H. The proton translocation complex V0 consists of the proton transport subunit a, a ring of proteolipid subunits c9c'', rotary subunit d, subunits e and f, and the accessory subunits ATP6AP1/Ac45 and ATP6AP2/PRR. Kidney.

Functionally, subunit of the V1 complex of vacuolar(H+)-ATPase (V-ATPase), a multisubunit enzyme composed of a peripheral complex (V1) that hydrolyzes ATP and a membrane integral complex (V0) that translocates protons. V-ATPase is responsible for acidifying and maintaining the pH of intracellular compartments and in some cell types, is targeted to the plasma membrane, where it is responsible for acidifying the extracellular environment. The sequence is that of V-type proton ATPase subunit G 3 (Atp6v1g3) from Mus musculus (Mouse).